We begin with the raw amino-acid sequence, 434 residues long: Protein TolB homolog (434 aa).

The signal sequence occupies residues 1-27; sequence MRSTRNSFACLCIMLFGMLFVPFTLRA. Positions 413–434 are disordered; the sequence is SNQRPLLNMQGEQQQPSWSVSK.

It belongs to the TolB family.

The protein resides in the periplasm. The chain is Protein TolB homolog from Chlorobaculum tepidum (strain ATCC 49652 / DSM 12025 / NBRC 103806 / TLS) (Chlorobium tepidum).